Reading from the N-terminus, the 341-residue chain is Alpha-ketoglutarate-dependent dioxygenase oryG (341 aa).

Position 100 (His100) interacts with substrate. Fe cation contacts are provided by His140 and Asp142. Residue Thr167 participates in 2-oxoglutarate binding. Fe cation is bound at residue His299. 2-oxoglutarate is bound by residues Arg311 and Arg315. Arg315 serves as a coordination point for substrate.

Belongs to the TfdA dioxygenase family. It depends on Fe(2+) as a cofactor.

Its pathway is secondary metabolite biosynthesis. Functionally, alpha-ketoglutarate-dependent dioxygenase; part of the gene cluster that mediates the biosynthesis of oryzines, natural products with an unusual maleidride backbone. The two subunits of the fungal fatty acid synthase oryfasA and oryfasB probably form octenoic acid. This fatty acid is most likely activated by the acyl-CoA ligase oryP to give octenyl-CoA before the citrate synthase-like protein oryE catalyzes condensation with oxaloacetate to form tricarboxylic acid. The next steps of the pathways are conjectural, but a favorite possible route has been proposed, beginning with decarboxylation and concomitant dehydration by the decarboxylase oryM, followed by tautomerization, which may lead to the production of a diene intermediate. Reduction of this diene intermediate could give the known metabolite piliformic acid. On the pathway to oryzine B and oryzine A, however, hydroxylation of the diene by the alpha-ketoglutarate-dependent dioxygenase oryG and lactonisation by the lactonohydrolases oryH or oryL could give oryzine B directly. Finally, enoyl reduction by the dehydrogenase oryD would then convert oryzine B into oryzine A. The polypeptide is Alpha-ketoglutarate-dependent dioxygenase oryG (Aspergillus oryzae (strain ATCC 42149 / RIB 40) (Yellow koji mold)).